Here is a 601-residue protein sequence, read N- to C-terminus: Cdc42-interacting protein 4 (601 aa).

Positions 1-117 (MDWGTELWDQ…EMKQERKMHF (117 aa)) are required for podosome formation and interaction with AKAP9 and microtubules. Residues 1 to 117 (MDWGTELWDQ…EMKQERKMHF (117 aa)) are required for translocation to the plasma membrane in response to insulin. Residues 1–264 (MDWGTELWDQ…AANAVDPKND (264 aa)) form the F-BAR domain. The stretch at 67 to 259 (FSQQQSFVQI…EGMKVAANAV (193 aa)) forms a coiled coil. Disordered stretches follow at residues 280-358 (GDVE…GRDP), 390-420 (DFSH…EVDQ), and 479-543 (RGDS…SPIG). A compositionally biased stretch (polar residues) spans 289–302 (QPMNRAPSDSSLGT). The tract at residues 293–537 (RAPSDSSLGT…TEFDEDFEEE (245 aa)) is interaction with CDC42. Residues 293-601 (RAPSDSSLGT…PTSYLRVTLN (309 aa)) form an interaction with PDE6G region. 3 positions are modified to phosphoserine: S296, S298, and S299. Over residues 314 to 329 (GRSRTKRWPFGKKNKP) the composition is skewed to basic residues. A Phosphoserine modification is found at S335. Low complexity predominate over residues 336–346 (PLGGPVPSALP). At S351 the chain carries Phosphoserine. A coiled-coil region spans residues 388–481 (TEDFSHLPPE…ESRVLSNRGD (94 aa)). In terms of domain architecture, REM-1 spans 393–470 (HLPPEQQRKR…VQKYEAWLAE (78 aa)). Residues 407-420 (LEERSRELQKEVDQ) are compositionally biased toward basic and acidic residues. The interval 471 to 601 (AESRVLSNRG…PTSYLRVTLN (131 aa)) is required for interaction with FASLG and localization to lysosomes. S482 carries the phosphoserine modification. Positions 487 to 541 (ARPPDPPASAPPDSSSNSASQDTKESSEEPPSEESQDTPIYTEFDEDFEEEPTSP) are interaction with DNM2 and WASL. Residues 497 to 506 (PPDSSSNSAS) show a composition bias toward low complexity. Residues 529 to 538 (EFDEDFEEEP) show a composition bias toward acidic residues. Residues 529 to 601 (EFDEDFEEEP…PTSYLRVTLN (73 aa)) are interaction with DNM1 and WASL. The segment at 538 to 601 (PTSPIGHCVA…PTSYLRVTLN (64 aa)) is required for podosome formation. Positions 540–601 (SPIGHCVAIY…PTSYLRVTLN (62 aa)) constitute an SH3 domain. Positions 544–601 (HCVAIYHFEGSSEGTISMAEGEDLSLMEEDKGDGWTRVRRKEGGEGYVPTSYLRVTLN) are interaction with WAS. An interaction with ARHGAP17, DAAM1, DIAPH1 and DIAPH2 region spans residues 546–601 (VAIYHFEGSSEGTISMAEGEDLSLMEEDKGDGWTRVRRKEGGEGYVPTSYLRVTLN).

This sequence belongs to the FNBP1 family. As to quaternary structure, interacts specifically with GTP-bound RHOQ. Interacts with DNM2 and PDE6G. Homodimerizes, the dimers can polymerize end-to-end to form filamentous structures. Interacts specifically with GTP-bound CDC42. Interacts with AKAP9, ARHGAP17, DAAM1, DIAPH1, DIAPH2, DNM1, FASLG/FASL, GAPVD1, LYN, microtubules, SRC, WAS/WASP and WASL/N-WASP. Interacts with the ligand binding domain of the thyroid receptor (TR) in the presence of thyroid hormone. May interact with CTNNB1 and HD/HTT. In terms of processing, tyrosine phosphorylated. Also phosphorylated by PKA. As to expression, expressed in brain, colon, heart, kidney, liver, lung, megakaryocyte, ovary, pancreas, peripheral blood lymphocytes, placenta, prostate, skeletal muscle, small intestine, spleen, testis, thymus and trachea.

The protein localises to the cytoplasm. It localises to the cytoskeleton. The protein resides in the cell cortex. It is found in the lysosome. Its subcellular location is the golgi apparatus. The protein localises to the cell membrane. It localises to the cell projection. The protein resides in the phagocytic cup. It is found in the perinuclear region. Functionally, required for translocation of GLUT4 to the plasma membrane in response to insulin signaling. Required to coordinate membrane tubulation with reorganization of the actin cytoskeleton during endocytosis. Binds to lipids such as phosphatidylinositol 4,5-bisphosphate and phosphatidylserine and promotes membrane invagination and the formation of tubules. Also promotes CDC42-induced actin polymerization by recruiting WASL/N-WASP which in turn activates the Arp2/3 complex. Actin polymerization may promote the fission of membrane tubules to form endocytic vesicles. Required for the formation of podosomes, actin-rich adhesion structures specific to monocyte-derived cells. May be required for the lysosomal retention of FASLG/FASL. The sequence is that of Cdc42-interacting protein 4 (TRIP10) from Homo sapiens (Human).